A 445-amino-acid polypeptide reads, in one-letter code: Tripartite motif-containing protein 43B (445 aa).

An RING-type zinc finger spans residues 16–57 (CSICQGIFMNPVYLKCGHKFCEACLLLFQEDIKFPAYCPMCM). The B box-type zinc-finger motif lies at 88-129 (SEEHKCVTHKAKKMIFCDKSKILLCHLCSDSQEHSGHTHCSI). 4 residues coordinate Zn(2+): cysteine 93, histidine 96, cysteine 115, and histidine 121. Residues 271-445 (RLRAHSIPGL…VRPFFSAVYT (175 aa)) enclose the B30.2/SPRY domain.

It belongs to the TRIM/RBCC family.

This is Tripartite motif-containing protein 43B from Mus musculus (Mouse).